We begin with the raw amino-acid sequence, 174 residues long: Co-chaperone protein HscB homolog (174 aa).

Residues 2–74 form the J domain; it reads NYFELFSLLP…IQRAEHLLAL (73 aa).

It belongs to the HscB family. Interacts with HscA and stimulates its ATPase activity.

Its function is as follows. Co-chaperone involved in the maturation of iron-sulfur cluster-containing proteins. Seems to help targeting proteins to be folded toward HscA. The sequence is that of Co-chaperone protein HscB homolog from Shewanella pealeana (strain ATCC 700345 / ANG-SQ1).